The chain runs to 662 residues: MPPGGSGQGGCPRRPPALAGPLPPPPPPPPLPLLLGLLLLLGAAEGARVSSSLSTTHHVHHFHSKHGTVPIAINRMPFLTRSGHAGTTYIFGKGGALITYTWPPNDRPSTRMDRLAVGFSTHQRSAVLVRVDSASGLGDYLQLHIDQGTVGVIFNVGTDDITIDEPNAIVSDGKYHVVRFTRSGGNATLQVDSWPVNERYPAGNFDNERLAIARQRIPYRLGRVVDEWLLDKGRQLTIFNSQAAIKIGGRDQGRPFQGQVSGLYYNGLKVLALAAESDPNVRTEGHLRLVGEGPSVLLSAETTATTLLADMATTIMETTTTMATTTTRRGRSPTMRDSTTQNTDDLLVASAECPSDDEDLEECEPSTGGELILPIITEDSLDPPPVATRSPFVPPPPTFYPFLTGVGATQDTLPPPAARRPSSGGPCQAERDDSDCEEPVEASGFASGEVFDSSLPPTDDEDFYTTFPLVTDRTTLLSPRKPAPRPNLRTDGATGAPGVLLAPSAPAPNLPAGKMNHRDPLQPLLENPPLGPGVPTAFEPRRPPPLRPGVTSVPGFPRLPTANPTGPGERGPPGAVEVIRESSSTTGMVVGIVAAAALCILILLYAMYKYRNRDEGSYQVDQSRNYISNSAQSNGAVVKEKAPAAPKTPSKAKKNKDKEYYV.

Over residues 1–10 the composition is skewed to gly residues; it reads MPPGGSGQGG. The tract at residues 1–27 is disordered; sequence MPPGGSGQGGCPRRPPALAGPLPPPPP. A signal peptide spans 1–46; the sequence is MPPGGSGQGGCPRRPPALAGPLPPPPPPPPLPLLLGLLLLLGAAEG. Over 47–586 the chain is Extracellular; it reads ARVSSSLSTT…EVIRESSSTT (540 aa). The region spanning 87 to 295 is the Laminin G-like domain; it reads TTYIFGKGGA…HLRLVGEGPS (209 aa). Residues D139 and V156 each contribute to the Ca(2+) site. N186 is a glycosylation site (N-linked (GlcNAc...) asparagine). 2 residues coordinate Ca(2+): I238 and N240. Residue S350 is glycosylated (O-linked (Xyl...) (heparan sulfate) serine). Disordered stretches follow at residues 408-458, 476-496, and 530-557; these read ATQD…LPPT, LLSP…ATGA, and LGPG…PGFP. The chain crosses the membrane as a helical span at residues 587-607; sequence GMVVGIVAAAALCILILLYAM. Residues 608–662 lie on the Cytoplasmic side of the membrane; the sequence is YKYRNRDEGSYQVDQSRNYISNSAQSNGAVVKEKAPAAPKTPSKAKKNKDKEYYV. The disordered stretch occupies residues 629-662; it reads NSAQSNGAVVKEKAPAAPKTPSKAKKNKDKEYYV.

This sequence belongs to the neurexin family. As to quaternary structure, interacts (via cytoplasmic C-terminal region) with CASK. Isoform Beta 4b binds alpha-dystroglycan and neuroligins NLGN1, NLGN2 and NLGN3. Interacts with CBLN1, CBLN2 and, less avidly, with CBLN4. Interacts with CLSTN3. In terms of processing, O-glycosylated; contains heparan sulfate. Heparan sulfate attachment is required for synapse development by mediating interactions with neuroligins. Brain (neuronal synapse).

The protein resides in the presynaptic cell membrane. Functionally, neuronal cell surface protein that may be involved in cell recognition and cell adhesion. The polypeptide is Neurexin-2-beta (Nrxn2) (Rattus norvegicus (Rat)).